An 835-amino-acid polypeptide reads, in one-letter code: Leucine--tRNA ligase (835 aa).

The short motif at 36–46 is the 'HIGH' region element; that stretch reads PYPSGKIHVGH. The 'KMSKS' region signature appears at 602–606; the sequence is KMSKS. An ATP-binding site is contributed by Lys605.

The protein belongs to the class-I aminoacyl-tRNA synthetase family.

The protein resides in the cytoplasm. The enzyme catalyses tRNA(Leu) + L-leucine + ATP = L-leucyl-tRNA(Leu) + AMP + diphosphate. The chain is Leucine--tRNA ligase from Rickettsia peacockii (strain Rustic).